Reading from the N-terminus, the 123-residue chain is Small ribosomal subunit protein uS12 (123 aa).

The disordered stretch occupies residues 11 to 32; sequence PRQEKTYREKARHLGASPQKRG. Aspartate 89 bears the 3-methylthioaspartic acid mark.

This sequence belongs to the universal ribosomal protein uS12 family. As to quaternary structure, part of the 30S ribosomal subunit. Contacts proteins S8 and S17. May interact with IF1 in the 30S initiation complex.

In terms of biological role, with S4 and S5 plays an important role in translational accuracy. Interacts with and stabilizes bases of the 16S rRNA that are involved in tRNA selection in the A site and with the mRNA backbone. Located at the interface of the 30S and 50S subunits, it traverses the body of the 30S subunit contacting proteins on the other side and probably holding the rRNA structure together. The combined cluster of proteins S8, S12 and S17 appears to hold together the shoulder and platform of the 30S subunit. The chain is Small ribosomal subunit protein uS12 from Methylocella silvestris (strain DSM 15510 / CIP 108128 / LMG 27833 / NCIMB 13906 / BL2).